Reading from the N-terminus, the 344-residue chain is Galactinol synthase 1 (344 aa).

Lysine 111 is a catalytic residue. Aspartate 127, aspartate 129, and histidine 265 together coordinate Mn(2+).

Belongs to the glycosyltransferase 8 family. Galactosyltransferase subfamily. A divalent metal cation is required as a cofactor. Accumulates in mature seeds. Expressed in seedlings (axes and cotyledons), meristems, vascular tissues and emerging lateral roots. Present in abscission zones.

Its subcellular location is the cytoplasm. It catalyses the reaction myo-inositol + UDP-alpha-D-galactose = alpha-D-galactosyl-(1-&gt;3)-1D-myo-inositol + UDP + H(+). In terms of biological role, galactinol synthase involved in the biosynthesis of raffinose family oligosaccharides (RFOs) that function as osmoprotectants. Promotes plant stress tolerance such as heat, chilling, salinity and methylviologen (MV), a superoxide radical generating drug, by mediating raffinose accumulation, an osmoprotective substance. This chain is Galactinol synthase 1 (GOLS1), found in Arabidopsis thaliana (Mouse-ear cress).